The sequence spans 299 residues: tRNA dimethylallyltransferase (299 aa).

5 to 12 (GPTASGKT) serves as a coordination point for ATP. 7–12 (TASGKT) provides a ligand contact to substrate. Interaction with substrate tRNA stretches follow at residues 30–33 (DSAL), 154–158 (QRLSR), and 235–240 (RCVGYR).

It belongs to the IPP transferase family. In terms of assembly, monomer. Mg(2+) is required as a cofactor.

It carries out the reaction adenosine(37) in tRNA + dimethylallyl diphosphate = N(6)-dimethylallyladenosine(37) in tRNA + diphosphate. Functionally, catalyzes the transfer of a dimethylallyl group onto the adenine at position 37 in tRNAs that read codons beginning with uridine, leading to the formation of N6-(dimethylallyl)adenosine (i(6)A). The polypeptide is tRNA dimethylallyltransferase (Shewanella denitrificans (strain OS217 / ATCC BAA-1090 / DSM 15013)).